A 536-amino-acid chain; its full sequence is Chromosomal replication initiator protein DnaA (536 aa).

A domain I, interacts with DnaA modulators region spans residues 1 to 72 (MNDFWQHCSA…DLARDFWNAP (72 aa)). The domain II stretch occupies residues 72–199 (PIEVQFVLDP…EAADSMYERS (128 aa)). The disordered stretch occupies residues 97–121 (RAPLPAANPAPVTAGPAPSGAADAN). A compositionally biased stretch (low complexity) spans 105-121 (PAPVTAGPAPSGAADAN). The interval 200–416 (KLNPVLTFDN…GALRKILAYS (217 aa)) is domain III, AAA+ region. Residues Gly244, Gly246, Lys247, and Thr248 each coordinate ATP. A domain IV, binds dsDNA region spans residues 417–536 (KFHGREITIE…LHVLEQTLKG (120 aa)).

It belongs to the DnaA family. In terms of assembly, oligomerizes as a right-handed, spiral filament on DNA at oriC.

It localises to the cytoplasm. Its function is as follows. Plays an essential role in the initiation and regulation of chromosomal replication. ATP-DnaA binds to the origin of replication (oriC) to initiate formation of the DNA replication initiation complex once per cell cycle. Binds the DnaA box (a 9 base pair repeat at the origin) and separates the double-stranded (ds)DNA. Forms a right-handed helical filament on oriC DNA; dsDNA binds to the exterior of the filament while single-stranded (ss)DNA is stabiized in the filament's interior. The ATP-DnaA-oriC complex binds and stabilizes one strand of the AT-rich DNA unwinding element (DUE), permitting loading of DNA polymerase. After initiation quickly degrades to an ADP-DnaA complex that is not apt for DNA replication. Binds acidic phospholipids. This chain is Chromosomal replication initiator protein DnaA, found in Burkholderia thailandensis (strain ATCC 700388 / DSM 13276 / CCUG 48851 / CIP 106301 / E264).